A 718-amino-acid chain; its full sequence is Cyclomaltodextrin glucanotransferase (718 aa).

An N-terminal signal peptide occupies residues 1–34 (MFQMAKRAFLSTTLTLGLLAGSALPFLPASAVYA). The A1 stretch occupies residues 35 to 172 (DPDTAVTNKQ…GIKIVIDFAP (138 aa)). Residues aspartate 61, asparagine 63, asparagine 66, and asparagine 67 each contribute to the Ca(2+) site. The cysteines at positions 77 and 84 are disulfide-linked. Ca(2+) is bound by residues glycine 85 and aspartate 87. Residue 134 to 135 (YW) coordinates substrate. Asparagine 173 contacts Ca(2+). The b stretch occupies residues 173 to 236 (NHTSPAMETD…NLYDLADFNH (64 aa)). Histidine 174 is a binding site for substrate. Isoleucine 224 lines the Ca(2+) pocket. Substrate contacts are provided by residues 227 to 230 (NLYD) and aspartate 230. Residue aspartate 233 participates in Ca(2+) binding. The tract at residues 237 to 440 (NNATIDKYFK…LRKSNPAIAY (204 aa)) is A2. Arginine 261 contacts substrate. Aspartate 263 functions as the Nucleophile in the catalytic mechanism. Residues 266–267 (KH) and histidine 267 each bind substrate. A Ca(2+)-binding site is contributed by histidine 267. Glutamate 291 acts as the Proton donor in catalysis. Residues histidine 361, aspartate 405, and arginine 409 each coordinate substrate. Residues 441 to 528 (GSTQQRWINN…ATAVWQYTTA (88 aa)) are c. The d stretch occupies residues 529–614 (ETTPTIGHVG…SNAYNNFTIL (86 aa)). The IPT/TIG domain maps to 532 to 612 (PTIGHVGPVM…VNSNAYNNFT (81 aa)). The 106-residue stretch at 613–718 (ILTGDQVTVR…GTATVTVNWQ (106 aa)) folds into the CBM20 domain. The interval 615–718 (TGDQVTVRFV…GTATVTVNWQ (104 aa)) is e.

It belongs to the glycosyl hydrolase 13 family. Monomer. Ca(2+) is required as a cofactor.

It localises to the secreted. The catalysed reaction is Cyclizes part of a (1-&gt;4)-alpha-D-glucan chain by formation of a (1-&gt;4)-alpha-D-glucosidic bond.. The sequence is that of Cyclomaltodextrin glucanotransferase from Niallia circulans (Bacillus circulans).